Consider the following 168-residue polypeptide: Lipoprotein signal peptidase (168 aa).

3 helical membrane passes run 8–28, 70–90, and 104–124; these read TLLV…VVLL, KYFL…YLFF, and VLLC…GHIV. Residues D125 and D143 contribute to the active site. A helical membrane pass occupies residues 134–154; it reads WAFPTFNVADVLISLGTLLLV.

Belongs to the peptidase A8 family.

Its subcellular location is the cell inner membrane. It catalyses the reaction Release of signal peptides from bacterial membrane prolipoproteins. Hydrolyzes -Xaa-Yaa-Zaa-|-(S,diacylglyceryl)Cys-, in which Xaa is hydrophobic (preferably Leu), and Yaa (Ala or Ser) and Zaa (Gly or Ala) have small, neutral side chains.. It functions in the pathway protein modification; lipoprotein biosynthesis (signal peptide cleavage). In terms of biological role, this protein specifically catalyzes the removal of signal peptides from prolipoproteins. This Chlamydia pneumoniae (Chlamydophila pneumoniae) protein is Lipoprotein signal peptidase.